A 248-amino-acid polypeptide reads, in one-letter code: 2,3-bisphosphoglycerate-dependent phosphoglycerate mutase (248 aa).

Residues 8–15, 21–22, R60, 87–90, K98, 114–115, and 183–184 contribute to the substrate site; these read RHGESTWN, TG, ERHY, RR, and GN. The active-site Tele-phosphohistidine intermediate is H9. Catalysis depends on E87, which acts as the Proton donor/acceptor.

This sequence belongs to the phosphoglycerate mutase family. BPG-dependent PGAM subfamily. In terms of assembly, homodimer.

It catalyses the reaction (2R)-2-phosphoglycerate = (2R)-3-phosphoglycerate. The protein operates within carbohydrate degradation; glycolysis; pyruvate from D-glyceraldehyde 3-phosphate: step 3/5. Its function is as follows. Catalyzes the interconversion of 2-phosphoglycerate and 3-phosphoglycerate. This is 2,3-bisphosphoglycerate-dependent phosphoglycerate mutase from Cupriavidus pinatubonensis (strain JMP 134 / LMG 1197) (Cupriavidus necator (strain JMP 134)).